Reading from the N-terminus, the 309-residue chain is Olfactory receptor 5AC2 (309 aa).

Over Met-1–Val-27 the chain is Extracellular. N-linked (GlcNAc...) asparagine glycosylation is present at Asn-7. The helical transmembrane segment at Leu-28 to Ile-48 threads the bilayer. Residues Val-49 to His-56 are Cytoplasmic-facing. The chain crosses the membrane as a helical span at residues Leu-57 to Thr-77. Topologically, residues Ser-78–Thr-101 are extracellular. A disulfide bridge links Cys-99 with Cys-191. The chain crosses the membrane as a helical span at residues Gln-102 to Tyr-122. Residues Asp-123–Pro-135 lie on the Cytoplasmic side of the membrane. The chain crosses the membrane as a helical span at residues Val-136 to Leu-156. At His-157–Ala-198 the chain is on the extracellular side. The helical transmembrane segment at Leu-199–Ser-219 threads the bilayer. The Cytoplasmic segment spans residues Tyr-220–Ala-239. Residues Phe-240–Met-260 traverse the membrane as a helical segment. Topologically, residues Tyr-261–Asp-273 are extracellular. Residues Lys-274–Leu-294 traverse the membrane as a helical segment. Over Arg-295–Lys-309 the chain is Cytoplasmic.

This sequence belongs to the G-protein coupled receptor 1 family.

It is found in the cell membrane. Functionally, odorant receptor. In Homo sapiens (Human), this protein is Olfactory receptor 5AC2 (OR5AC2).